Here is a 100-residue protein sequence, read N- to C-terminus: Integration host factor subunit alpha (100 aa).

The protein belongs to the bacterial histone-like protein family. Heterodimer of an alpha and a beta chain.

Its function is as follows. This protein is one of the two subunits of integration host factor, a specific DNA-binding protein that functions in genetic recombination as well as in transcriptional and translational control. The polypeptide is Integration host factor subunit alpha (Buchnera aphidicola subsp. Schizaphis graminum (strain Sg)).